The chain runs to 149 residues: Transcriptional regulator MraZ (149 aa).

SpoVT-AbrB domains are found at residues 9-52 (AYSY…PRAQ) and 82-125 (AQEV…DRAR).

Belongs to the MraZ family. In terms of assembly, forms oligomers.

It is found in the cytoplasm. It localises to the nucleoid. This chain is Transcriptional regulator MraZ, found in Treponema pallidum subsp. pallidum (strain SS14).